The sequence spans 1342 residues: WD repeat-containing protein 19 (1342 aa).

WD repeat units lie at residues 11-51 (TWLG…RSEI), 52-92 (NLPG…TSQL), 95-134 (GMRD…KIPV), 137-175 (KHTK…IRQT), 273-311 (NHKD…DMYV), and 317-356 (EENK…LGDA). 6 TPR repeats span residues 736-769 (AQDL…AKHL), 775-808 (PFIS…DNKE), 840-873 (RVLK…DKAA), 895-928 (PKIH…QSVI), 951-984 (LDGA…NEAF), and 1020-1053 (EKRY…EDNV).

Component of the IFT complex A (IFT-A) complex. IFT-A complex is divided into a core subcomplex composed of IFT122:IFT140:WDR19 which is associated with TULP3 and a peripheral subcomplex composed of IFT43:WDR35:TTC21B. Interacts (via C-terminal region) with IFT122 (via C-terminal region). Interacts with BBS1. Interacts with TTC25. In terms of tissue distribution, some isoforms are tissue-specific. Highly expressed in the prostate. Lower expression in the cerebellum, pituitary gland, fetal lung, and pancreas. In normal prostate, expressed in both basal and luminal epithelial cells. No expression detected in fibromuscular stromal cells, endothelial cells, or infiltrating lymphocytes. Uniformed expression in prostate adenocarcinoma cells.

It is found in the cell projection. It localises to the cilium. The protein resides in the cytoplasm. Its subcellular location is the cytoskeleton. The protein localises to the cilium basal body. It is found in the photoreceptor outer segment. It localises to the flagellum. Its function is as follows. As component of the IFT complex A (IFT-A), a complex required for retrograde ciliary transport and entry into cilia of G protein-coupled receptors (GPCRs), it is involved in cilia function and/or assembly. Essential for functional IFT-A assembly and ciliary entry of GPCRs. Associates with the BBSome complex to mediate ciliary transport. In Homo sapiens (Human), this protein is WD repeat-containing protein 19.